The primary structure comprises 610 residues: Solute carrier family 23 member 3 (610 aa).

Over residues 1-16 (MSRSPLNPSQLRSVGS) the composition is skewed to polar residues. A disordered region spans residues 1-32 (MSRSPLNPSQLRSVGSQDALAPLPPPAPQNPS). Residues 1-49 (MSRSPLNPSQLRSVGSQDALAPLPPPAPQNPSTHSWDPLCGSLPWGLSC) lie on the Cytoplasmic side of the membrane. A helical transmembrane segment spans residues 50–70 (LLALQHVLVMASLLCVSHLLL). Residues 71-85 (LCSLSPGGLSYSPSQ) lie on the Extracellular side of the membrane. The helical transmembrane segment at 86–106 (LLASSFFSCGMSTILQTWMGS) threads the bilayer. At 107 to 164 (RLPLVQAPSLEFLIPALVLTSQKLPRAIQTPGNSSLMLHLCRGPSCHGLGHWNTSLQE) the chain is on the cytoplasmic side. A helical membrane pass occupies residues 165-185 (VSGAVVVSGLLQGMMGLLGSP). Residues 186-187 (GH) are Extracellular-facing. Residues 188–208 (VFPHCGPLVLAPSLVVAGLSA) form a helical membrane-spanning segment. Residues 209 to 211 (HRE) are Cytoplasmic-facing. The chain crosses the membrane as a helical span at residues 212 to 232 (VAQFCFTHWGLALLVILLMVV). Topologically, residues 233-266 (CSQHLGSCQFHVCPWRRASTSSTHTPLPVFRLLS) are extracellular. The chain crosses the membrane as a helical span at residues 267–287 (VLIPVACVWIVSAFVGFSVIP). The Cytoplasmic portion of the chain corresponds to 288–316 (QELSAPTKAPWIWLPHPGEWNWPLLTPRA). Residues 317-337 (LAAGISMALAASTSSLGCYAL) form a helical membrane-spanning segment. Residues 338–355 (CGRLLHLPPPPPHACSRG) are Extracellular-facing. The helical transmembrane segment at 356–376 (LSLEGLGSVLAGLLGSPMGTA) threads the bilayer. Over 377–394 (SSFPNVGKVGLIQAGSQQ) the chain is Cytoplasmic. The helical transmembrane segment at 395 to 414 (VAHLVGLLCVGLGLSPRLAQ) threads the bilayer. At 415–423 (LLTTIPLPV) the chain is on the extracellular side. The helical transmembrane segment at 424–446 (VGGVLGVTQAVVLSAGFSSFYLA) threads the bilayer. The Cytoplasmic portion of the chain corresponds to 447 to 452 (DIDSGR). Residues 453 to 472 (NIFIVGFSIFMALLLPRWFR) traverse the membrane as a helical segment. Residues 473–486 (EAPVLFSTGWSPLD) lie on the Extracellular side of the membrane. Residues 487 to 507 (VLLHSLLTQPIFLAGLSGFLL) traverse the membrane as a helical segment. Topologically, residues 508-610 (ENTIPGTQLE…SSREGFRSQK (103 aa)) are cytoplasmic. Positions 571 to 610 (PEDPGDEEGGSSEPEEMADLLPGSGEPCPESSREGFRSQK) are disordered. The span at 573 to 588 (DPGDEEGGSSEPEEMA) shows a compositional bias: acidic residues. The segment covering 601–610 (SSREGFRSQK) has biased composition (basic and acidic residues).

It belongs to the nucleobase:cation symporter-2 (NCS2) (TC 2.A.40) family.

The protein resides in the membrane. It catalyses the reaction hypoxanthine(out) + Na(+)(out) = hypoxanthine(in) + Na(+)(in). In terms of biological role, acts as a sodium-dependent hypoxanthine transporter. May show xanthine-hypoxanthine exchange activity. The polypeptide is Solute carrier family 23 member 3 (SLC23A3) (Homo sapiens (Human)).